Here is a 293-residue protein sequence, read N- to C-terminus: Bifunctional protein FolD (293 aa).

Residues 165–167, S190, and I231 each bind NADP(+); that span reads GRS.

The protein belongs to the tetrahydrofolate dehydrogenase/cyclohydrolase family. In terms of assembly, homodimer.

The enzyme catalyses (6R)-5,10-methylene-5,6,7,8-tetrahydrofolate + NADP(+) = (6R)-5,10-methenyltetrahydrofolate + NADPH. It catalyses the reaction (6R)-5,10-methenyltetrahydrofolate + H2O = (6R)-10-formyltetrahydrofolate + H(+). It participates in one-carbon metabolism; tetrahydrofolate interconversion. Its function is as follows. Catalyzes the oxidation of 5,10-methylenetetrahydrofolate to 5,10-methenyltetrahydrofolate and then the hydrolysis of 5,10-methenyltetrahydrofolate to 10-formyltetrahydrofolate. The polypeptide is Bifunctional protein FolD (Synechococcus sp. (strain CC9902)).